The sequence spans 902 residues: Zinc finger CCCH-type antiviral protein 1 (902 aa).

Ala-2 carries the post-translational modification N-acetylalanine. An N-terminal domain region spans residues 2-254 (ADPEVCCFIT…ARSKSRDRFF (253 aa)). Positions 69-76 (RARVCRRK) match the Nuclear localization signal motif. 4 C3H1-type zinc fingers span residues 73-86 (CRRK…DNLH), 88-110 (CKLN…KYSH), 150-172 (CKSY…SRLH), and 169-193 (SRLH…SHNL). Residues 221 to 251 (SKHMQKNPPGPRAPSSHRRNMAYRARSKSRD) form a disordered region. The segment at 224–254 (MQKNPPGPRAPSSHRRNMAYRARSKSRDRFF) is binding to EXOSC5. Basic residues predominate over residues 235-247 (SSHRRNMAYRARS). A phosphoserine; by GSK3-beta mark is found at Ser-257, Ser-263, Ser-267, and Ser-271. Over residues 265–278 (SASAERSCTPSPDQ) the composition is skewed to polar residues. Disordered stretches follow at residues 265-287 (SASA…SLED) and 299-373 (YLGS…GARR). Thr-273 is subject to Phosphothreonine. Phosphoserine occurs at positions 275 and 284. The short motif at 285-292 (LEDAPVDD) is the Nuclear export signal element. 6 positions are modified to phosphoserine: Ser-302, Ser-327, Ser-335, Ser-355, Ser-378, and Ser-387. 2 stretches are compositionally biased toward polar residues: residues 310–336 (SGSS…NGSQ) and 344–369 (PGST…TNDQ). Thr-393 carries the post-translational modification Phosphothreonine. Phosphoserine occurs at positions 407, 469, 492, and 494. The disordered stretch occupies residues 445-481 (LNYKSTSSGHREISSPRIQDAGPASRDVQATGRIADD). At Thr-554 the chain carries Phosphothreonine. 2 positions are modified to phosphoserine: Tyr-572 and Ser-590. Residues 594-681 (SVTKPANSVF…ASKTQKDVIR (88 aa)) form the WWE domain. The PARP catalytic domain occupies 716-902 (PQEDFCFLSS…YTEDKACVIS (187 aa)).

It belongs to the ARTD/PARP family. As to quaternary structure, homodimer or homooligomer. Homooligomerization is essential for its antiviral activity. Interacts with EXOSC5. Interacts (via N-terminal domain) with DDX17 in an RNA-independent manner. Interacts with EXOSC3, EXOSC7, DCP2 and DCP1A. Interacts with PARN in an RNA-independent manner. Interacts with XRN1 in an RNA-dependent manner. Isoform 2 interacts (via zinc-fingers) with RIGI in an RNA-dependent manner. Interacts (via N-terminal domain) with DHX30 (via N-terminus) in an RNA-independent manner. Post-translationally, phosphorylation at Ser-275 is essential for sequential phosphorylation of Ser-271, Ser-267, Ser-263 and Ser-257 by GSK3-beta. Phosphorylation by GSK3-beta enhances its antiviral activity.

It localises to the cytoplasm. The protein resides in the nucleus. Its function is as follows. Antiviral protein which inhibits the replication of viruses by recruiting the cellular RNA degradation machineries to degrade the viral mRNAs. Binds to a ZAP-responsive element (ZRE) present in the target viral mRNA, recruits cellular poly(A)-specific ribonuclease PARN to remove the poly(A) tail, and the 3'-5' exoribonuclease complex exosome to degrade the RNA body from the 3'-end. It also recruits the decapping complex DCP1-DCP2 through RNA helicase p72 (DDX17) to remove the cap structure of the viral mRNA to initiate its degradation from the 5'-end. Its target viruses belong to families which include retroviridae: human immunodeficiency virus type 1 (HIV-1), moloney and murine leukemia virus (MoMLV) and xenotropic MuLV-related virus (XMRV), filoviridae: ebola virus (EBOV) and marburg virus (MARV), togaviridae: sindbis virus (SINV) and Ross river virus (RRV). Specifically targets the multiply spliced but not unspliced or singly spliced HIV-1 mRNAs for degradation. Isoform 1 is a more potent viral inhibitor than isoform 2. Isoform 2 acts as a positive regulator of RIGI signaling resulting in activation of the downstream effector IRF3 leading to the expression of type I IFNs and IFN stimulated genes (ISGs). This is Zinc finger CCCH-type antiviral protein 1 from Homo sapiens (Human).